The primary structure comprises 522 residues: Protein nucleotidyltransferase YdiU (522 aa).

Residues glycine 109, glycine 111, arginine 112, lysine 132, aspartate 144, glycine 145, arginine 195, and arginine 202 each contribute to the ATP site. The Proton acceptor role is filled by aspartate 271. Residues asparagine 272 and aspartate 281 each contribute to the Mg(2+) site. Aspartate 281 is an ATP binding site.

This sequence belongs to the SELO family. Requires Mg(2+) as cofactor. The cofactor is Mn(2+).

The enzyme catalyses L-seryl-[protein] + ATP = 3-O-(5'-adenylyl)-L-seryl-[protein] + diphosphate. The catalysed reaction is L-threonyl-[protein] + ATP = 3-O-(5'-adenylyl)-L-threonyl-[protein] + diphosphate. It carries out the reaction L-tyrosyl-[protein] + ATP = O-(5'-adenylyl)-L-tyrosyl-[protein] + diphosphate. It catalyses the reaction L-histidyl-[protein] + UTP = N(tele)-(5'-uridylyl)-L-histidyl-[protein] + diphosphate. The enzyme catalyses L-seryl-[protein] + UTP = O-(5'-uridylyl)-L-seryl-[protein] + diphosphate. The catalysed reaction is L-tyrosyl-[protein] + UTP = O-(5'-uridylyl)-L-tyrosyl-[protein] + diphosphate. Nucleotidyltransferase involved in the post-translational modification of proteins. It can catalyze the addition of adenosine monophosphate (AMP) or uridine monophosphate (UMP) to a protein, resulting in modifications known as AMPylation and UMPylation. This chain is Protein nucleotidyltransferase YdiU, found in Burkholderia cenocepacia (strain HI2424).